The following is a 362-amino-acid chain: Phosphoserine aminotransferase (362 aa).

Position 42 (R42) interacts with L-glutamate. Pyridoxal 5'-phosphate is bound by residues A76 to R77, W102, T153, D174, and Q197. K198 bears the N6-(pyridoxal phosphate)lysine mark. N239–T240 provides a ligand contact to pyridoxal 5'-phosphate.

It belongs to the class-V pyridoxal-phosphate-dependent aminotransferase family. SerC subfamily. In terms of assembly, homodimer. Requires pyridoxal 5'-phosphate as cofactor.

It is found in the cytoplasm. It catalyses the reaction O-phospho-L-serine + 2-oxoglutarate = 3-phosphooxypyruvate + L-glutamate. The enzyme catalyses 4-(phosphooxy)-L-threonine + 2-oxoglutarate = (R)-3-hydroxy-2-oxo-4-phosphooxybutanoate + L-glutamate. It participates in amino-acid biosynthesis; L-serine biosynthesis; L-serine from 3-phospho-D-glycerate: step 2/3. It functions in the pathway cofactor biosynthesis; pyridoxine 5'-phosphate biosynthesis; pyridoxine 5'-phosphate from D-erythrose 4-phosphate: step 3/5. Functionally, catalyzes the reversible conversion of 3-phosphohydroxypyruvate to phosphoserine and of 3-hydroxy-2-oxo-4-phosphonooxybutanoate to phosphohydroxythreonine. In Proteus mirabilis (strain HI4320), this protein is Phosphoserine aminotransferase.